The primary structure comprises 139 residues: D-ribose pyranase (139 aa).

The active-site Proton donor is histidine 20. Substrate contacts are provided by residues aspartate 28, histidine 106, and 128-130 (YAN).

This sequence belongs to the RbsD / FucU family. RbsD subfamily. In terms of assembly, homodecamer.

Its subcellular location is the cytoplasm. The catalysed reaction is beta-D-ribopyranose = beta-D-ribofuranose. Its pathway is carbohydrate metabolism; D-ribose degradation; D-ribose 5-phosphate from beta-D-ribopyranose: step 1/2. In terms of biological role, catalyzes the interconversion of beta-pyran and beta-furan forms of D-ribose. The sequence is that of D-ribose pyranase from Aeromonas hydrophila subsp. hydrophila (strain ATCC 7966 / DSM 30187 / BCRC 13018 / CCUG 14551 / JCM 1027 / KCTC 2358 / NCIMB 9240 / NCTC 8049).